A 380-amino-acid polypeptide reads, in one-letter code: Chaperone protein DnaJ (380 aa).

Residues 5-70 (DFYEVLGVSK…NLRARYDQYG (66 aa)) form the J domain. The CR-type zinc finger occupies 135-213 (GVSKEIKVPS…CHGEGRYQKT (79 aa)). The Zn(2+) site is built by Cys148, Cys151, Cys165, Cys168, Cys187, Cys190, Cys201, and Cys204. CXXCXGXG motif repeat units lie at residues 148–155 (CEVCNGSG), 165–172 (CPTCHGAG), 187–194 (CPHCHGRG), and 201–208 (CRKCHGEG).

It belongs to the DnaJ family. As to quaternary structure, homodimer. The cofactor is Zn(2+).

The protein localises to the cytoplasm. In terms of biological role, participates actively in the response to hyperosmotic and heat shock by preventing the aggregation of stress-denatured proteins and by disaggregating proteins, also in an autonomous, DnaK-independent fashion. Unfolded proteins bind initially to DnaJ; upon interaction with the DnaJ-bound protein, DnaK hydrolyzes its bound ATP, resulting in the formation of a stable complex. GrpE releases ADP from DnaK; ATP binding to DnaK triggers the release of the substrate protein, thus completing the reaction cycle. Several rounds of ATP-dependent interactions between DnaJ, DnaK and GrpE are required for fully efficient folding. Also involved, together with DnaK and GrpE, in the DNA replication of plasmids through activation of initiation proteins. The chain is Chaperone protein DnaJ from Aeromonas salmonicida (strain A449).